The chain runs to 493 residues: Endoglucanase 23 (493 aa).

A signal peptide spans 1–23 (MKASIYLVTVFILLLLLLPTAIP). Catalysis depends on D78, which acts as the Nucleophile. N297 carries N-linked (GlcNAc...) asparagine glycosylation. H410 is an active-site residue. An N-linked (GlcNAc...) asparagine glycan is attached at N465. E470 is a catalytic residue.

It belongs to the glycosyl hydrolase 9 (cellulase E) family.

The protein resides in the secreted. It catalyses the reaction Endohydrolysis of (1-&gt;4)-beta-D-glucosidic linkages in cellulose, lichenin and cereal beta-D-glucans.. The polypeptide is Endoglucanase 23 (Arabidopsis thaliana (Mouse-ear cress)).